The following is a 128-amino-acid chain: 3-aminoacrylate deaminase RutC (128 aa).

The protein belongs to the RutC family. As to quaternary structure, homotrimer.

The catalysed reaction is (Z)-3-aminoacrylate + H2O + H(+) = 3-oxopropanoate + NH4(+). Functionally, involved in pyrimidine catabolism. Catalyzes the deamination of 3-aminoacrylate to malonic semialdehyde, a reaction that can also occur spontaneously. RutC may facilitate the reaction and modulate the metabolic fitness, rather than catalyzing essential functions. The protein is 3-aminoacrylate deaminase RutC of Escherichia coli (strain SE11).